We begin with the raw amino-acid sequence, 342 residues long: Ferredoxin--NADP reductase (342 aa).

FAD contacts are provided by cysteine 17, aspartate 36, glutamine 44, tyrosine 49, isoleucine 89, phenylalanine 124, aspartate 289, and threonine 330.

This sequence belongs to the ferredoxin--NADP reductase type 2 family. Homodimer. Requires FAD as cofactor.

It catalyses the reaction 2 reduced [2Fe-2S]-[ferredoxin] + NADP(+) + H(+) = 2 oxidized [2Fe-2S]-[ferredoxin] + NADPH. The sequence is that of Ferredoxin--NADP reductase from Rhodopseudomonas palustris (strain HaA2).